The primary structure comprises 150 residues: Ribonuclease K6 (150 aa).

Residues 1–23 (MVLCFPLLLLLLVLWGPVCLLHA) form the signal peptide. The Proton acceptor role is filled by His38. 4 disulfide bridges follow: Cys46/Cys104, Cys60/Cys114, Cys78/Cys129, and Cys85/Cys92. Asn55 is a glycosylation site (N-linked (GlcNAc...) asparagine). Substrate is bound by residues 61-65 (KHQNT) and Lys86. N-linked (GlcNAc...) asparagine glycosylation occurs at Asn100. Residue Arg105 coordinates substrate. Residue His145 is the Proton donor of the active site.

The protein belongs to the pancreatic ribonuclease family. As to quaternary structure, interacts (via N-terminus) with bacterial lipopolysaccharide (LPS).

It localises to the secreted. Its subcellular location is the lysosome. The protein resides in the cytoplasmic granule. Ribonuclease which shows a preference for the pyrimidines uridine and cytosine. Has potent antibacterial activity against a range of Gram-positive and Gram-negative bacteria, including P.aeruginosa, A.baumanii, M.luteus, S.aureus, E.faecalis, E.faecium, S.saprophyticus and E.coli. Causes loss of bacterial membrane integrity, and also promotes agglutination of Gram-negative bacteria. Probably contributes to urinary tract sterility. Bactericidal activity is independent of RNase activity. The sequence is that of Ribonuclease K6 (RNASE6) from Miopithecus talapoin (Angolan talapoin).